The sequence spans 206 residues: KH domain-containing protein 3 (206 aa).

Residues 1–40 (MDTPRRFPTLVQLMQPKAMPVEVLGHLPKRFSWFHSEFLK) are involved in RNA binding. The KH; atypical domain occupies 40–103 (KNPKVVRLEV…SYQEDTIKMI (64 aa)). Basic and acidic residues predominate over residues 144–153 (GTQRSVEVRE). Residues 144–206 (GTQRSVEVRE…EDTRAPVTRL (63 aa)) form a disordered region. Position 145 is a phosphothreonine (Thr-145). Polar residues predominate over residues 166 to 183 (TGTQQSLEAANQSGTQRS). At Ser-171 the chain carries Phosphoserine.

Belongs to the KHDC1 family. In terms of assembly, component of the subcortical maternal complex (SCMC), at least composed of NLRP5, KHDC3L, OOEP, and TLE6. Within the complex, interacts with NLRP5, KHDC3L and TLE6. The SCMC may facilitate translocation of its components between the nuclear and cytoplasmic compartments. Forms a scaffold complex with OOEP/FLOPED, and interacts with BLM and TRIM25 at DNA replication forks. Interacts with PARP1; the interaction is increased following the formation of DNA double-strand breaks. Interacts with NUMA1.

It is found in the cytoplasm. Its subcellular location is the cell cortex. The protein resides in the nucleus. The protein localises to the mitochondrion. It localises to the cytoskeleton. It is found in the microtubule organizing center. Its subcellular location is the centrosome. The protein resides in the chromosome. In terms of biological role, component of the subcortical maternal complex (SCMC), a multiprotein complex that plays a key role in early embryonic development. The SCMC complex is a structural constituent of cytoplasmic lattices, which consist in fibrous structures found in the cytoplasm of oocytes and preimplantation embryos. They are required to store maternal proteins critical for embryonic development, such as proteins that control epigenetic reprogramming of the preimplantation embryo, and prevent their degradation or activation. KHDC3 ensures proper spindle assembly by regulating the localization of AURKA via RHOA signaling and of PLK1 via a RHOA-independent process. Required for the localization of MAD2L1 to kinetochores to enable spindle assembly checkpoint function. As part of the OOEP-KHDC3 scaffold, recruits BLM and TRIM25 to DNA replication forks, thereby promoting the ubiquitination of BLM by TRIM25, enhancing BLM retainment at replication forks and therefore promoting stalled replication fork restart. Regulates homologous recombination-mediated DNA repair via recruitment of RAD51 to sites of DNA double-strand breaks, and sustainment of PARP1 activity, which in turn modulates downstream ATM or ATR activation. Activation of ATM or ATR in response to DNA double-strand breaks may be cell-type specific. Its role in DNA double-strand break repair is independent of its role in restarting stalled replication forks. Promotes neural stem cell neurogenesis and neuronal differentiation in the hippocampus. May regulate normal development of learning, memory and anxiety. Capable of binding RNA. The sequence is that of KH domain-containing protein 3 (KHDC3L) from Macaca mulatta (Rhesus macaque).